Here is an 86-residue protein sequence, read N- to C-terminus: Large ribosomal subunit protein bL31 (86 aa).

Residues 66–86 form a disordered region; it reads GMGSADSATSQETKEAKESDK. Residues 77–86 are compositionally biased toward basic and acidic residues; that stretch reads ETKEAKESDK.

The protein belongs to the bacterial ribosomal protein bL31 family. Type A subfamily. In terms of assembly, part of the 50S ribosomal subunit.

Binds the 23S rRNA. This Prochlorococcus marinus (strain MIT 9515) protein is Large ribosomal subunit protein bL31.